Here is a 194-residue protein sequence, read N- to C-terminus: Imidazoleglycerol-phosphate dehydratase (194 aa).

This sequence belongs to the imidazoleglycerol-phosphate dehydratase family.

It localises to the cytoplasm. It catalyses the reaction D-erythro-1-(imidazol-4-yl)glycerol 3-phosphate = 3-(imidazol-4-yl)-2-oxopropyl phosphate + H2O. It functions in the pathway amino-acid biosynthesis; L-histidine biosynthesis; L-histidine from 5-phospho-alpha-D-ribose 1-diphosphate: step 6/9. This chain is Imidazoleglycerol-phosphate dehydratase, found in Halalkalibacterium halodurans (strain ATCC BAA-125 / DSM 18197 / FERM 7344 / JCM 9153 / C-125) (Bacillus halodurans).